The chain runs to 101 residues: Small ribosomal subunit protein uS14 (101 aa).

Belongs to the universal ribosomal protein uS14 family. In terms of assembly, part of the 30S ribosomal subunit. Contacts proteins S3 and S10.

In terms of biological role, binds 16S rRNA, required for the assembly of 30S particles and may also be responsible for determining the conformation of the 16S rRNA at the A site. This chain is Small ribosomal subunit protein uS14, found in Cronobacter sakazakii (strain ATCC BAA-894) (Enterobacter sakazakii).